A 135-amino-acid chain; its full sequence is Large ribosomal subunit protein uL16c (135 aa).

Belongs to the universal ribosomal protein uL16 family. Part of the 50S ribosomal subunit.

The protein resides in the plastid. Its subcellular location is the chloroplast. The polypeptide is Large ribosomal subunit protein uL16c (Eucalyptus globulus subsp. globulus (Tasmanian blue gum)).